A 108-amino-acid polypeptide reads, in one-letter code: Protein YcgL (108 aa).

The 85-residue stretch at 12–96 (MFCVIYRSSK…PPEDLLKQHL (85 aa)) folds into the YcgL domain.

This is Protein YcgL from Shigella sonnei (strain Ss046).